The following is a 200-amino-acid chain: ADP-ribosylation factor-like protein 4D (200 aa).

Gly-2 carries N-myristoyl glycine lipidation. GTP is bound by residues Gly-27–Thr-34, Asp-75–Gln-79, and Asn-134–Asp-137.

This sequence belongs to the small GTPase superfamily. Arf family. As to quaternary structure, interacts with CYTH2; the interaction is direct and ARL4D GTP-dependent. Does not interact with ARL4D.

The protein resides in the nucleus. Its subcellular location is the nucleolus. It is found in the cell membrane. It localises to the cytoplasm. Functionally, small GTP-binding protein which cycles between an inactive GDP-bound and an active GTP-bound form, and the rate of cycling is regulated by guanine nucleotide exchange factors (GEF) and GTPase-activating proteins (GAP). GTP-binding protein that does not act as an allosteric activator of the cholera toxin catalytic subunit. Recruits CYTH1, CYTH2, CYTH3 and CYTH4 to the plasma membrane in GDP-bound form. The protein is ADP-ribosylation factor-like protein 4D (ARL4D) of Bos taurus (Bovine).